A 150-amino-acid polypeptide reads, in one-letter code: 3-dehydroquinate dehydratase (150 aa).

Tyr26 serves as the catalytic Proton acceptor. 3 residues coordinate substrate: Asn77, His83, and Asp90. Residue His103 is the Proton donor of the active site. Residues 104–105 and Arg114 contribute to the substrate site; that span reads LS.

The protein belongs to the type-II 3-dehydroquinase family. In terms of assembly, homododecamer.

It catalyses the reaction 3-dehydroquinate = 3-dehydroshikimate + H2O. The protein operates within metabolic intermediate biosynthesis; chorismate biosynthesis; chorismate from D-erythrose 4-phosphate and phosphoenolpyruvate: step 3/7. Functionally, catalyzes a trans-dehydration via an enolate intermediate. This Histophilus somni (strain 129Pt) (Haemophilus somnus) protein is 3-dehydroquinate dehydratase.